A 37-amino-acid polypeptide reads, in one-letter code: Ice-structuring protein 3 (37 aa).

The protein belongs to the type-I AFP family.

In terms of biological role, contributes to protect fish blood from freezing at subzero sea water temperatures. Lowers the blood freezing point. Binds to nascent ice crystals and prevents further growth. In Pseudopleuronectes americanus (Winter flounder), this protein is Ice-structuring protein 3.